The sequence spans 481 residues: Glutamate--glyoxylate aminotransferase 2 (481 aa).

At lysine 291 the chain carries N6-(pyridoxal phosphate)lysine. The short motif at 479-481 (SRM) is the Peroxisomal targeting signal element.

It belongs to the class-I pyridoxal-phosphate-dependent aminotransferase family. Alanine aminotransferase subfamily. In terms of assembly, homodimer. Pyridoxal 5'-phosphate is required as a cofactor. In terms of processing, the N-terminus is blocked. As to expression, expressed at low levels in seedlings, leaves, flowers, roots, and green siliques.

The protein resides in the peroxisome. The catalysed reaction is L-alanine + 2-oxoglutarate = pyruvate + L-glutamate. It carries out the reaction glyoxylate + L-alanine = glycine + pyruvate. The enzyme catalyses glycine + 2-oxoglutarate = glyoxylate + L-glutamate. The protein operates within photosynthesis; C4 acid pathway. Its pathway is amino-acid degradation; L-alanine degradation via transaminase pathway; pyruvate from L-alanine: step 1/1. Its function is as follows. Catalyzes the Glu:glyoxylate aminotransferase (GGT), Ala:glyoxylate aminotransferase (AGT), Ala:2-oxoglutarate aminotransferase (AKT) and Glu:pyruvate aminotransferase (GPT) reactions in peroxisomes. The polypeptide is Glutamate--glyoxylate aminotransferase 2 (GGAT2) (Arabidopsis thaliana (Mouse-ear cress)).